Reading from the N-terminus, the 420-residue chain is G2/mitotic-specific cyclin-A (420 aa).

Positions 64–93 are disordered; that stretch reads VQGSRIQPTRAAKEKLKPPQNISDSQLVND. Residues 83-93 are compositionally biased toward polar residues; the sequence is QNISDSQLVND.

It belongs to the cyclin family. Cyclin AB subfamily.

Functionally, essential for the control of the cell cycle at the G2/M (mitosis) transition. Interacts with the CDC2 and CDK2 protein kinases to form MPF. G2/M cyclins accumulate steadily during G2 and are abruptly destroyed at mitosis. The sequence is that of G2/mitotic-specific cyclin-A from Hydra viridissima (Green hydra).